Consider the following 164-residue polypeptide: UPF0201 protein MA_4659 (164 aa).

It belongs to the UPF0201 family.

This chain is UPF0201 protein MA_4659, found in Methanosarcina acetivorans (strain ATCC 35395 / DSM 2834 / JCM 12185 / C2A).